The primary structure comprises 390 residues: S-adenosylmethionine synthase 3 (390 aa).

Position 9 (glutamate 9) interacts with Mg(2+). An ATP-binding site is contributed by histidine 15. Glutamate 43 contributes to the K(+) binding site. Positions 56 and 99 each coordinate L-methionine. ATP contacts are provided by residues 167–169 (DGK), 235–238 (SGRF), aspartate 246, 252–253 (RK), alanine 269, lysine 273, and lysine 277. Aspartate 246 serves as a coordination point for L-methionine. Lysine 277 contributes to the L-methionine binding site.

Belongs to the AdoMet synthase family. In terms of assembly, homotetramer. Mn(2+) is required as a cofactor. Mg(2+) serves as cofactor. Requires Co(2+) as cofactor. The cofactor is K(+). As to expression, mostly expressed in stems and leaves.

The protein resides in the cytoplasm. The enzyme catalyses L-methionine + ATP + H2O = S-adenosyl-L-methionine + phosphate + diphosphate. Its pathway is amino-acid biosynthesis; S-adenosyl-L-methionine biosynthesis; S-adenosyl-L-methionine from L-methionine: step 1/1. Its function is as follows. Catalyzes the formation of S-adenosylmethionine from methionine and ATP. The reaction comprises two steps that are both catalyzed by the same enzyme: formation of S-adenosylmethionine (AdoMet) and triphosphate, and subsequent hydrolysis of the triphosphate. The sequence is that of S-adenosylmethionine synthase 3 (SAM3) from Solanum lycopersicum (Tomato).